The primary structure comprises 506 residues: ATP synthase subunit alpha, mitochondrial (506 aa).

171–178 (GDRQTGKT) contacts ATP.

Belongs to the ATPase alpha/beta chains family. F-type ATPases have 2 components, CF(1) - the catalytic core - and CF(0) - the membrane proton channel. CF(1) has five subunits: alpha(3), beta(3), gamma(1), delta(1), epsilon(1). CF(0) has three main subunits: a, b and c.

Its subcellular location is the mitochondrion. It is found in the mitochondrion inner membrane. In terms of biological role, mitochondrial membrane ATP synthase (F(1)F(0) ATP synthase or Complex V) produces ATP from ADP in the presence of a proton gradient across the membrane which is generated by electron transport complexes of the respiratory chain. F-type ATPases consist of two structural domains, F(1) - containing the extramembraneous catalytic core, and F(0) - containing the membrane proton channel, linked together by a central stalk and a peripheral stalk. During catalysis, ATP synthesis in the catalytic domain of F(1) is coupled via a rotary mechanism of the central stalk subunits to proton translocation. Subunits alpha and beta form the catalytic core in F(1). Rotation of the central stalk against the surrounding alpha(3)beta(3) subunits leads to hydrolysis of ATP in three separate catalytic sites on the beta subunits. Subunit alpha does not bear the catalytic high-affinity ATP-binding sites. This is ATP synthase subunit alpha, mitochondrial (ATPA) from Beta vulgaris (Sugar beet).